Here is an 87-residue protein sequence, read N- to C-terminus: Down syndrome critical region protein 10 (87 aa).

In terms of tissue distribution, expressed in placenta and testis.

The polypeptide is Down syndrome critical region protein 10 (DSCR10) (Homo sapiens (Human)).